Consider the following 457-residue polypeptide: DDB1- and CUL4-associated factor 10 (457 aa).

WD repeat units lie at residues 65–104 (RTHGAVFNLEYSPDGSVLTLACEQTEVLLFDPLSSKHIKT), 108–146 (AHEDCVNNIRFLDNRMFATCSDDTTIALWDLRKLNSKAC), 150–189 (GHTSWVKNIEYDKNTRLLVTSGFDGNVIIWDTNRCTEDGC), and 195–234 (FHTRFLMRMRLTPDCSKMLISTSSGYLLILHELDLTKSLE). Low complexity predominate over residues 246 to 265 (TASTSDMTSTSSETRPSSSP). The disordered stretch occupies residues 246–304 (TASTSDMTSTSSETRPSSSPCHNSDSGPLFEKHMSRSSQREGTSPRNSLEVLTPEVPGE). Polar residues predominate over residues 281 to 292 (RSSQREGTSPRN). 3 WD repeats span residues 306 to 346 (DRGN…QEGT), 368 to 406 (VGRGYIKELCFSPDGRMIASPHGYGIRLLGFDSQCKELV), and 424 to 457 (SHKDVVLTTKFSPTHCQIASGCLSGRVSLYQPKF).

This sequence belongs to the WD repeat DCAF10 family.

It functions in the pathway protein modification; protein ubiquitination. Functionally, may function as a substrate receptor for CUL4-DDB1 E3 ubiquitin-protein ligase complex. The chain is DDB1- and CUL4-associated factor 10 (dcaf10) from Xenopus laevis (African clawed frog).